Consider the following 406-residue polypeptide: Succinylornithine transaminase (406 aa).

Lys-252 is modified (N6-(pyridoxal phosphate)lysine).

The protein belongs to the class-III pyridoxal-phosphate-dependent aminotransferase family. AstC subfamily. Pyridoxal 5'-phosphate serves as cofactor.

The catalysed reaction is N(2)-succinyl-L-ornithine + 2-oxoglutarate = N-succinyl-L-glutamate 5-semialdehyde + L-glutamate. It functions in the pathway amino-acid degradation; L-arginine degradation via AST pathway; L-glutamate and succinate from L-arginine: step 3/5. Its function is as follows. Catalyzes the transamination of N(2)-succinylornithine and alpha-ketoglutarate into N(2)-succinylglutamate semialdehyde and glutamate. Can also act as an acetylornithine aminotransferase. The sequence is that of Succinylornithine transaminase from Escherichia fergusonii (strain ATCC 35469 / DSM 13698 / CCUG 18766 / IAM 14443 / JCM 21226 / LMG 7866 / NBRC 102419 / NCTC 12128 / CDC 0568-73).